Reading from the N-terminus, the 290-residue chain is GTPase Era (290 aa).

The Era-type G domain maps to 2–169 (KSGFVSIIGR…KDKIYENLNE (168 aa)). The G1 stretch occupies residues 10-17 (GRPSTGKS). 10–17 (GRPSTGKS) contacts GTP. Positions 36–40 (QTTRN) are G2. Residues 57–60 (DTPG) form a G3 region. GTP is bound by residues 57–61 (DTPGF) and 119–122 (NKID). Residues 119–122 (NKID) are G4. A G5 region spans residues 148–150 (ISA). Residues 200–276 (LKEELPYSIY…NLFLQVKLRK (77 aa)) enclose the KH type-2 domain.

The protein belongs to the TRAFAC class TrmE-Era-EngA-EngB-Septin-like GTPase superfamily. Era GTPase family. In terms of assembly, monomer.

It is found in the cytoplasm. The protein localises to the cell inner membrane. Functionally, an essential GTPase that binds both GDP and GTP, with rapid nucleotide exchange. Plays a role in 16S rRNA processing and 30S ribosomal subunit biogenesis and possibly also in cell cycle regulation and energy metabolism. This is GTPase Era from Borrelia duttonii (strain Ly).